Here is a 257-residue protein sequence, read N- to C-terminus: Cytochrome c oxidase subunit 3 (257 aa).

Transmembrane regions (helical) follow at residues 13–33, 36–56, 80–100, 154–174, 195–215, and 237–257; these read PWPI…VSYF, LSMY…FQWW, GMIL…WAFF, YISA…FTMF, FFMT…FLLV, and AWYW…MYWW.

Belongs to the cytochrome c oxidase subunit 3 family. In terms of assembly, component of the cytochrome c oxidase (complex IV, CIV), a multisubunit enzyme composed of a catalytic core of 3 subunits and several supernumerary subunits. The complex exists as a monomer or a dimer and forms supercomplexes (SCs) in the inner mitochondrial membrane with ubiquinol-cytochrome c oxidoreductase (cytochrome b-c1 complex, complex III, CIII).

It localises to the mitochondrion inner membrane. It carries out the reaction 4 Fe(II)-[cytochrome c] + O2 + 8 H(+)(in) = 4 Fe(III)-[cytochrome c] + 2 H2O + 4 H(+)(out). In terms of biological role, component of the cytochrome c oxidase, the last enzyme in the mitochondrial electron transport chain which drives oxidative phosphorylation. The respiratory chain contains 3 multisubunit complexes succinate dehydrogenase (complex II, CII), ubiquinol-cytochrome c oxidoreductase (cytochrome b-c1 complex, complex III, CIII) and cytochrome c oxidase (complex IV, CIV), that cooperate to transfer electrons derived from NADH and succinate to molecular oxygen, creating an electrochemical gradient over the inner membrane that drives transmembrane transport and the ATP synthase. Cytochrome c oxidase is the component of the respiratory chain that catalyzes the reduction of oxygen to water. Electrons originating from reduced cytochrome c in the intermembrane space (IMS) are transferred via the dinuclear copper A center (CU(A)) of subunit 2 and heme A of subunit 1 to the active site in subunit 1, a binuclear center (BNC) formed by heme A3 and copper B (CU(B)). The BNC reduces molecular oxygen to 2 water molecules using 4 electrons from cytochrome c in the IMS and 4 protons from the mitochondrial matrix. The chain is Cytochrome c oxidase subunit 3 (COIII) from Rhipicephalus sanguineus (Brown dog tick).